A 448-amino-acid polypeptide reads, in one-letter code: Asparagine--tRNA ligase (448 aa).

This sequence belongs to the class-II aminoacyl-tRNA synthetase family. In terms of assembly, homodimer.

It localises to the cytoplasm. The catalysed reaction is tRNA(Asn) + L-asparagine + ATP = L-asparaginyl-tRNA(Asn) + AMP + diphosphate + H(+). In Streptococcus thermophilus (strain ATCC BAA-491 / LMD-9), this protein is Asparagine--tRNA ligase.